Reading from the N-terminus, the 325-residue chain is Ubiquitin thioesterase OTU1 (325 aa).

A UBX-like region spans residues 7–86 (RIRSKTGVEN…NVSSISSNPG (80 aa)). One can recognise an OTU domain in the interval 123–246 (ATRRVTDDDN…GIHYDALSIC (124 aa)). A cys-loop region spans residues 128 to 134 (TDDDNSC). Asp131 is an active-site residue. Cys134 serves as the catalytic Nucleophile. A variable-loop region spans residues 185 to 195 (IQNPKNWGGAI). The his-loop stretch occupies residues 235 to 239 (YDGIH). A substrate-binding site is contributed by Ile238. His239 is a catalytic residue. The tract at residues 265 to 270 (KDSLAK) is S2 site. The C2H2-type zinc finger occupies 292–316 (LICLNCNKTLKGEKEAAIHASTTGH). His316 is a catalytic residue.

Its subcellular location is the cytoplasm. It carries out the reaction Thiol-dependent hydrolysis of ester, thioester, amide, peptide and isopeptide bonds formed by the C-terminal Gly of ubiquitin (a 76-residue protein attached to proteins as an intracellular targeting signal).. In terms of biological role, hydrolase that can remove conjugated ubiquitin from proteins and may therefore play an important regulatory role at the level of protein turnover by preventing degradation. This Dictyostelium discoideum (Social amoeba) protein is Ubiquitin thioesterase OTU1 (yod1).